Reading from the N-terminus, the 567-residue chain is Proline--tRNA ligase (567 aa).

The protein belongs to the class-II aminoacyl-tRNA synthetase family. ProS type 1 subfamily. In terms of assembly, homodimer.

It is found in the cytoplasm. The catalysed reaction is tRNA(Pro) + L-proline + ATP = L-prolyl-tRNA(Pro) + AMP + diphosphate. Catalyzes the attachment of proline to tRNA(Pro) in a two-step reaction: proline is first activated by ATP to form Pro-AMP and then transferred to the acceptor end of tRNA(Pro). As ProRS can inadvertently accommodate and process non-cognate amino acids such as alanine and cysteine, to avoid such errors it has two additional distinct editing activities against alanine. One activity is designated as 'pretransfer' editing and involves the tRNA(Pro)-independent hydrolysis of activated Ala-AMP. The other activity is designated 'posttransfer' editing and involves deacylation of mischarged Ala-tRNA(Pro). The misacylated Cys-tRNA(Pro) is not edited by ProRS. This chain is Proline--tRNA ligase, found in Streptomyces griseus subsp. griseus (strain JCM 4626 / CBS 651.72 / NBRC 13350 / KCC S-0626 / ISP 5235).